The chain runs to 309 residues: UPF0282 protein Msed_0584 (309 aa).

The protein belongs to the UPF0282 family.

In Metallosphaera sedula (strain ATCC 51363 / DSM 5348 / JCM 9185 / NBRC 15509 / TH2), this protein is UPF0282 protein Msed_0584.